A 650-amino-acid polypeptide reads, in one-letter code: Secretin OutD (650 aa).

An N-terminal signal peptide occupies residues M1–S18. Positions E20–G115 are N0. Residues E117–G181 form an N1 region. Residues D182–A255 are N2. The segment at G258 to D330 is N3. A secretin region spans residues Q335–D585. A s domain region spans residues S587–K650.

It belongs to the bacterial secretin family. GSP D subfamily. In terms of assembly, forms a cylindrical channel with 15 subunits.

It localises to the cell outer membrane. In terms of biological role, involved in a type II secretion system (T2SS, formerly general secretion pathway, GSP) for the export of proteins. Required for the translocation of the multiple pectic enzymes. This subunit forms the outer membrane channel. The polypeptide is Secretin OutD (outD) (Pectobacterium carotovorum subsp. carotovorum (Erwinia carotovora subsp. carotovora)).